The following is a 1573-amino-acid chain: Synaptojanin-1 (1573 aa).

An SAC domain is found at 119–442 (VRKVLNSGNF…GDSISKIYAG (324 aa)). The interval 500-899 (GSLRVSEQTL…GPPDGTVLVS (400 aa)) is catalytic. Ser-820 and Ser-830 each carry phosphoserine. Residues 902-971 (SSLPENNFFD…RTITIALKSP (70 aa)) enclose the RRM domain. Positions 1029 to 1054 (HLQPSSSSGLGTSPSSSPRTSPCQSP) are enriched in low complexity. Disordered stretches follow at residues 1029–1322 (HLQP…PLKI), 1341–1360 (SVQT…QLPS), 1370–1463 (VSCM…GFKD), and 1535–1573 (SRRP…FTER). At Ser-1053 the chain carries Phosphoserine. The span at 1108-1130 (PPPPRPVAPPTRPAPPQRPPPPS) shows a compositional bias: pro residues. A phosphoserine mark is found at Ser-1150 and Ser-1178. Arg-1201 is modified (omega-N-methylarginine). Thr-1220 carries the phosphothreonine modification. The span at 1221–1234 (PESQSKTSETSKGS) shows a compositional bias: polar residues. The residue at position 1292 (Ser-1292) is a Phosphoserine. The segment covering 1293 to 1304 (SHSLPSEASSQP) has biased composition (low complexity). Over residues 1313-1322 (DGKRESPLKI) the composition is skewed to basic and acidic residues. A phosphoserine mark is found at Ser-1318 and Ser-1345. Thr-1349 is subject to Phosphothreonine. The span at 1382–1407 (RSQSQENMRSSPNPFITGLTRTNPFS) shows a compositional bias: polar residues. 3 consecutive repeat copies span residues 1396 to 1398 (FIT), 1406 to 1408 (FSD), and 1417 to 1419 (FRA). The tract at residues 1396–1419 (FITGLTRTNPFSDRTAAPGNPFRA) is 3 X 3 AA repeats of N-P-F. Residues 1536-1555 (RRPPPPPVPLLPPGTSPPVD) are compositionally biased toward pro residues. Ser-1551 and Ser-1565 each carry phosphoserine.

It belongs to the synaptojanin family. This sequence in the central section; belongs to the inositol 1,4,5-trisphosphate 5-phosphatase family. In terms of assembly, interacts with ASH/GRB2. Interacts with PACSIN1, PACSIN2 and PACSIN3. Interacts with AMPH, SH3GL1, SH3GL2 and SH3GL3. Interacts with MYO1E (via SH3 domain). Interacts with BIN1 and DNM1. Interacts with EPS15.

The protein localises to the cytoplasm. Its subcellular location is the perinuclear region. It carries out the reaction a 1,2-diacyl-sn-glycero-3-phospho-(1D-myo-inositol-4,5-bisphosphate) + H2O = a 1,2-diacyl-sn-glycero-3-phospho-(1D-myo-inositol 4-phosphate) + phosphate. Functionally, phosphatase that acts on various phosphoinositides, including phosphatidylinositol 4-phosphate, phosphatidylinositol (4,5)-bisphosphate and phosphatidylinositol (3,4,5)-trisphosphate. Has a role in clathrin-mediated endocytosis. Hydrolyzes PIP2 bound to actin regulatory proteins resulting in the rearrangement of actin filaments downstream of tyrosine kinase and ASH/GRB2. The polypeptide is Synaptojanin-1 (SYNJ1) (Homo sapiens (Human)).